Here is a 24-residue protein sequence, read N- to C-terminus: Lactadherin (24 aa).

The protein resides in the membrane. It localises to the secreted. The protein localises to the cytoplasmic vesicle. Its subcellular location is the secretory vesicle. It is found in the acrosome membrane. Specific ligand for the alpha-v/beta-3 and alpha-v/beta-5 receptors. Also binds to phosphatidylserine-enriched cell surfaces in a receptor-independent manner. Zona pellucida-binding protein which may play a role in gamete interaction. Contributes to phagocytic removal of apoptotic cells in many tissues. Plays an important role in the maintenance of intestinal epithelial homeostasis and the promotion of mucosal healing. Promotes VEGF-dependent neovascularization. In Equus asinus (Donkey), this protein is Lactadherin.